Here is a 777-residue protein sequence, read N- to C-terminus: Aconitate hydratase, mitochondrial (777 aa).

Residues Q96 and 189 to 191 (DSH) contribute to the substrate site. Residues C383, C446, and C449 each contribute to the [4Fe-4S] cluster site. Substrate-binding positions include R472, R477, R605, and 668-669 (SR).

It belongs to the aconitase/IPM isomerase family. Monomer. [4Fe-4S] cluster is required as a cofactor.

Its subcellular location is the mitochondrion. It carries out the reaction citrate = D-threo-isocitrate. Its pathway is carbohydrate metabolism; tricarboxylic acid cycle; isocitrate from oxaloacetate: step 2/2. Functionally, catalyzes the isomerization of citrate to isocitrate via cis-aconitate, a step in the citric acid cycle. The protein is Aconitate hydratase, mitochondrial (ACO1) of Candida albicans (strain SC5314 / ATCC MYA-2876) (Yeast).